The chain runs to 31 residues: GCIATGSVCTLSKGCCTKNCGWNFKCNPPNQ.

Cystine bridges form between C2–C16, C9–C20, and C15–C26. Residues P28 and P29 each carry the 4-hydroxyproline modification.

The protein belongs to the nemertide family. Confined to the epidermis and to the mucus layer.

The protein localises to the secreted. In terms of biological role, toxin with similar potency against both insect and mammalian sodium channels (Nav). Delays the inactivation of most Nav channels tested (B.germanica (BgNav1); EC(50)=87.2 nM, human Nav1.1/SCN1A; EC(50)=125.8 nM, rat Nav1.2/SCN2A; EC(50)=97.9 nM, rat Nav1.3/SCN3A; EC(50)=127.7 nM, rat Nav1.4/SCN4A; EC(50)=1150.3 nM, human Nav1.5/SCN5A; EC(50)=149.2 nM, mouse Nav1.6/SCN8A; EC(50)=1361.8 nM, human Nav1.9/SCN9A; EC(50)=1296.7 nM). Inactivation is completely prevented by a concentration of 1 uM, resulting in sustained, non-inactivating current. In addition, the toxin significantly enhances the recovery from inactivation, and the open state is not required for the toxin to interact with the channel. In vivo, injection into brine shrimp (Artemia salina) stops movement or causes death after 24 hours (EC(50)=2.9 uM). The sequence is that of Nemertide alpha-2 from Lineus longissimus (Bootlace worm).